Consider the following 341-residue polypeptide: MSFPYSLKPFNTFGVEQSCLSLIEVHSKAELQSACLSLYQSKRPMLVLGGGSNIVFTDDFNGTVVRVLSKGISCSEDDTHFYLAVEAGENWHELVQFSLNQNMPGLENLALIPGTVGAAPIQNIGAYGVELCDICDWVEYLDLASGNLLRLTVDECEFAYRESIFKGSLRDKAVITAVGLRLPKAWQPKLAYGPLQSFTAETVTPREIFDRVCEVRSEKLPNPEVLGNAGSFFKNPIVSAATYMQLAARFPSIVGYAQPNGEVKLAAGWLIEHAGLKGFALGNAGVHAKQALVLVNLGHATGQDICRLALHVITRVNEVFGVKLEAEPRIMGLTGETSLDV.

The region spanning 15 to 185 is the FAD-binding PCMH-type domain; it reads VEQSCLSLIE…TAVGLRLPKA (171 aa). Residue Arg161 is part of the active site. The active-site Proton donor is Ser231. Glu327 is an active-site residue.

This sequence belongs to the MurB family. FAD is required as a cofactor.

Its subcellular location is the cytoplasm. The enzyme catalyses UDP-N-acetyl-alpha-D-muramate + NADP(+) = UDP-N-acetyl-3-O-(1-carboxyvinyl)-alpha-D-glucosamine + NADPH + H(+). It participates in cell wall biogenesis; peptidoglycan biosynthesis. Its function is as follows. Cell wall formation. This Shewanella sp. (strain ANA-3) protein is UDP-N-acetylenolpyruvoylglucosamine reductase.